An 88-amino-acid polypeptide reads, in one-letter code: Small ribosomal subunit protein uS15 (88 aa).

This sequence belongs to the universal ribosomal protein uS15 family. As to quaternary structure, part of the 30S ribosomal subunit. Forms a bridge to the 50S subunit in the 70S ribosome, contacting the 23S rRNA.

Functionally, one of the primary rRNA binding proteins, it binds directly to 16S rRNA where it helps nucleate assembly of the platform of the 30S subunit by binding and bridging several RNA helices of the 16S rRNA. In terms of biological role, forms an intersubunit bridge (bridge B4) with the 23S rRNA of the 50S subunit in the ribosome. The chain is Small ribosomal subunit protein uS15 from Borreliella afzelii (strain PKo) (Borrelia afzelii).